A 74-amino-acid chain; its full sequence is ATP synthase subunit 9, mitochondrial (74 aa).

2 consecutive transmembrane segments (helical) span residues 8–28 and 50–70; these read MGAGAATIALAGAAIGIGNVF and ILGFALTEAIALFALMMAFLI.

It belongs to the ATPase C chain family. In terms of assembly, F-type ATPases have 2 components, CF(1) - the catalytic core - and CF(0) - the membrane proton channel. CF(1) has five subunits: alpha(3), beta(3), gamma(1), delta(1), epsilon(1). CF(0) has three main subunits: a, b and c.

The protein resides in the mitochondrion membrane. Its function is as follows. This protein is one of the chains of the nonenzymatic membrane component (F0) of mitochondrial ATPase. The sequence is that of ATP synthase subunit 9, mitochondrial (ATP9) from Solanum lycopersicum (Tomato).